The sequence spans 708 residues: Polyribonucleotide nucleotidyltransferase (708 aa).

Mg(2+)-binding residues include Asp-488 and Asp-494. In terms of domain architecture, KH spans 555–614 (PRIYTMKIPQKKIAEVIGKGGATIRQLTEETGTTIEIGDDGTIKIAATDGESAANAISRI). One can recognise an S1 motif domain in the interval 624–692 (GTIYEGKVVR…RQGRVRLSIK (69 aa)).

The protein belongs to the polyribonucleotide nucleotidyltransferase family. As to quaternary structure, component of the RNA degradosome, which is a multiprotein complex involved in RNA processing and mRNA degradation. Mg(2+) serves as cofactor.

The protein localises to the cytoplasm. The catalysed reaction is RNA(n+1) + phosphate = RNA(n) + a ribonucleoside 5'-diphosphate. Involved in mRNA degradation. Catalyzes the phosphorolysis of single-stranded polyribonucleotides processively in the 3'- to 5'-direction. The protein is Polyribonucleotide nucleotidyltransferase of Pseudoalteromonas translucida (strain TAC 125).